A 1198-amino-acid polypeptide reads, in one-letter code: Tetratricopeptide repeat protein 17 (1198 aa).

The stretch at Phe295–Phe328 is one TPR 1 repeat. Residues Cys340–His382 adopt a coiled-coil conformation. TPR repeat units lie at residues Trp619–Gln652 and Pro689–Cys722. 2 disordered regions span residues Leu774–Ser793 and Val902–Leu954. Over residues Val902–Gly914 the composition is skewed to basic residues. TPR repeat units follow at residues Ser1071 to Gln1105, Asp1108 to Phe1141, and Ala1142 to Phe1175.

This sequence belongs to the TTC17 family. Interacts with CATIP.

It is found in the cytoplasm. The protein localises to the cell membrane. Its subcellular location is the cytoskeleton. Plays a role in primary ciliogenesis by modulating actin polymerization. The sequence is that of Tetratricopeptide repeat protein 17 (Ttc17) from Mus musculus (Mouse).